A 166-amino-acid polypeptide reads, in one-letter code: Calmodulin-like protein 5 (166 aa).

4 EF-hand domains span residues 11–46, 47–82, 96–131, and 132–166; these read EQVA…LGQT, PTRE…KASR, AADE…LGEK, and LTDE…LSDQ. Asp24, Asp26, Asp28, Cys30, Glu35, Asp60, Asp62, Asn64, Thr66, Glu71, Asp109, Asp111, Asp113, and Glu120 together coordinate Ca(2+). Lys131 is subject to N6,N6,N6-trimethyllysine. The Ca(2+) site is built by Asp145, Asp147, Asp149, Gln151, and Glu156.

Belongs to the calmodulin family.

In terms of biological role, potential calcium sensor. The sequence is that of Calmodulin-like protein 5 (CML5) from Oryza sativa subsp. japonica (Rice).